A 626-amino-acid polypeptide reads, in one-letter code: Myelin-associated glycoprotein (626 aa).

Residues 1–19 (MIFLTTLPLFWIMISASRG) form the signal peptide. The interaction with RTN4R and RTN4RL2 stretch occupies residues 20 to 325 (GHWGAWMPSS…RTVELSVMYA (306 aa)). Residues 20–516 (GHWGAWMPSS…HRLMWAKIGP (497 aa)) lie on the Extracellular side of the membrane. One can recognise an Ig-like V-type domain in the interval 22–120 (WGAWMPSSIS…LGGKYYFRGD (99 aa)). 3 disulfides stabilise this stretch: C37-C165, C42-C100, and C159-C217. 65-67 (YPK) serves as a coordination point for a ganglioside GT1b (d18:1(4E)). The N-linked (GlcNAc...) asparagine glycan is linked to N99. A ganglioside GT1b (d18:1(4E))-binding positions include R118 and 124-128 (YNQYT). 4 Ig-like C2-type domains span residues 139–237 (NTPN…LDVK), 241–325 (VIVE…VMYA), 327–412 (WKPT…VEFA), and 413–508 (PIIL…GAHR). Residues N223 and N246 are each glycosylated (N-linked (GlcNAc...) asparagine). C261 and C305 are disulfide-bonded. N-linked (GlcNAc...) asparagine glycans are attached at residues N315 and N332. Cysteines 347 and 392 form a disulfide. N406 carries an N-linked (GlcNAc...) asparagine glycan. Intrachain disulfides connect C421/C430 and C432/C488. Residues N450 and N454 are each glycosylated (N-linked (GlcNAc...) asparagine). Residues 517-536 (VGAVVAFAILIAIVCYITQT) form a helical membrane-spanning segment. C531 carries the S-palmitoyl cysteine lipid modification. The Cytoplasmic segment spans residues 537–626 (RRKKNVTESP…LAEYAEIRVK (90 aa)). Phosphoserine is present on residues S545, S547, and S549. The required for normal axon myelination in the central nervous system stretch occupies residues 577–626 (LGSERRLLGLRGEPPELDLSYSHSDLGKRPTKDSYTLTEELAEYAEIRVK). The interval 581 to 608 (RRLLGLRGEPPELDLSYSHSDLGKRPTK) is disordered.

This sequence belongs to the immunoglobulin superfamily. SIGLEC (sialic acid binding Ig-like lectin) family. As to quaternary structure, monomer and homodimer. Interacts (via the first three N-terminal Ig-like domains) with RTN4R and RTN4RL2. Interacts with isoform 2 of BSG. In terms of processing, N-glycosylated. Phosphorylated on tyrosine residues. Post-translationally, ubiquitinated, leading to proteasomal degradation. As to expression, detected in myelin. Detected in olfactory bulb and throughout the brain (at protein level). Detected in brain.

It localises to the cell membrane. Its subcellular location is the membrane raft. Functionally, adhesion molecule that mediates interactions between myelinating cells and neurons by binding to neuronal sialic acid-containing gangliosides and to the glycoproteins RTN4R and RTN4RL2. Not required for initial myelination, but seems to play a role in the maintenance of normal axon myelination. Protects motoneurons against apoptosis, also after injury; protection against apoptosis is probably mediated via interaction with neuronal RTN4R and RTN4RL2. Required to prevent degeneration of myelinated axons in adults; this probably depends on binding to gangliosides on the axon cell membrane. Negative regulator of neurite outgrowth; in dorsal root ganglion neurons the inhibition is mediated primarily via binding to neuronal RTN4R or RTN4RL2 and to a lesser degree via binding to neuronal gangliosides. In cerebellar granule cells the inhibition is mediated primarily via binding to neuronal gangliosides. In sensory neurons, inhibition of neurite extension depends only partially on RTN4R, RTN4RL2 and gangliosides. Inhibits axon longitudinal growth. Inhibits axon outgrowth by binding to RTN4R. Preferentially binds to alpha-2,3-linked sialic acid. Binds ganglioside Gt1b. This Rattus norvegicus (Rat) protein is Myelin-associated glycoprotein (Mag).